A 476-amino-acid chain; its full sequence is Transcription factor HBP-1b(c1) (476 aa).

Disordered stretches follow at residues 1–29 (ESRRGGGGPAAAAAAAGDPRGPMPGFGAP), 133–159 (HNNDNWGESSMADTSPRTDTSTDPDID), and 171–207 (QLAAPTASDSSDKSRDKLDHKSLRRLAQNREAARKSR). The segment covering 10–25 (AAAAAAAGDPRGPMPG) has biased composition (low complexity). A compositionally biased stretch (polar residues) spans 135–144 (NDNWGESSMA). The segment covering 180–191 (SSDKSRDKLDHK) has biased composition (basic and acidic residues). Positions 189–252 (DHKSLRRLAQ…SSGDQSQSAS (64 aa)) constitute a bZIP domain. The tract at residues 191 to 211 (KSLRRLAQNREAARKSRLRKK) is basic motif. Residues 201-242 (EAARKSRLRKKAYIQNLESSRLKLTQLEQELQRARQQGIFIS) are a coiled coil. Positions 217–231 (LESSRLKLTQLEQEL) are leucine-zipper. The 218-residue stretch at 256-473 (AVAFDMEYAR…RALSSLWLAR (218 aa)) folds into the DOG1 domain.

It belongs to the bZIP family. Binds DNA as a dimer.

It is found in the nucleus. Transcriptional activator that binds specifically to the DNA sequence 5'-TGACG-3'. Recognizes ocs elements like the as-1 motif of the cauliflower mosaic virus 35S promoter. Binding to the as-1-like cis elements mediate auxin- and salicylic acid-inducible transcription. Binds to the hexamer motif 5'-ACGTCA-3' of histone gene promoters. The chain is Transcription factor HBP-1b(c1) from Triticum aestivum (Wheat).